Consider the following 215-residue polypeptide: Pyridoxine/pyridoxamine 5'-phosphate oxidase (215 aa).

Residues 11-14 (RRDY) and lysine 69 each bind substrate. FMN contacts are provided by residues 64–69 (RVVLLK), 79–80 (YT), lysine 86, and glutamine 108. The substrate site is built by tyrosine 126, arginine 130, and serine 134. Residues 143–144 (QS) and tryptophan 188 contribute to the FMN site. A substrate-binding site is contributed by 194–196 (RLH). Arginine 198 lines the FMN pocket.

It belongs to the pyridoxamine 5'-phosphate oxidase family. As to quaternary structure, homodimer. It depends on FMN as a cofactor.

It catalyses the reaction pyridoxamine 5'-phosphate + O2 + H2O = pyridoxal 5'-phosphate + H2O2 + NH4(+). It carries out the reaction pyridoxine 5'-phosphate + O2 = pyridoxal 5'-phosphate + H2O2. Its pathway is cofactor metabolism; pyridoxal 5'-phosphate salvage; pyridoxal 5'-phosphate from pyridoxamine 5'-phosphate: step 1/1. It participates in cofactor metabolism; pyridoxal 5'-phosphate salvage; pyridoxal 5'-phosphate from pyridoxine 5'-phosphate: step 1/1. Catalyzes the oxidation of either pyridoxine 5'-phosphate (PNP) or pyridoxamine 5'-phosphate (PMP) into pyridoxal 5'-phosphate (PLP). The chain is Pyridoxine/pyridoxamine 5'-phosphate oxidase from Legionella pneumophila (strain Lens).